The chain runs to 269 residues: Tryptophan synthase alpha chain (269 aa).

Residues E50 and D61 each act as proton acceptor in the active site.

The protein belongs to the TrpA family. Tetramer of two alpha and two beta chains.

The enzyme catalyses (1S,2R)-1-C-(indol-3-yl)glycerol 3-phosphate + L-serine = D-glyceraldehyde 3-phosphate + L-tryptophan + H2O. It participates in amino-acid biosynthesis; L-tryptophan biosynthesis; L-tryptophan from chorismate: step 5/5. The alpha subunit is responsible for the aldol cleavage of indoleglycerol phosphate to indole and glyceraldehyde 3-phosphate. In Francisella tularensis subsp. tularensis (strain FSC 198), this protein is Tryptophan synthase alpha chain.